Reading from the N-terminus, the 279-residue chain is Phosphonoacetaldehyde hydrolase (279 aa).

Residue Asp20 is the Nucleophile of the active site. Residues Asp20 and Ala22 each coordinate Mg(2+). Lys62 functions as the Schiff-base intermediate with substrate in the catalytic mechanism. Asp196 is a binding site for Mg(2+).

The protein belongs to the HAD-like hydrolase superfamily. PhnX family. Homodimer. Requires Mg(2+) as cofactor.

The catalysed reaction is phosphonoacetaldehyde + H2O = acetaldehyde + phosphate + H(+). Functionally, involved in phosphonate degradation. The polypeptide is Phosphonoacetaldehyde hydrolase (Aeromonas hydrophila subsp. hydrophila (strain ATCC 7966 / DSM 30187 / BCRC 13018 / CCUG 14551 / JCM 1027 / KCTC 2358 / NCIMB 9240 / NCTC 8049)).